The following is a 40-amino-acid chain: uncharacterized protein (40 aa).

This is an uncharacterized protein from Sulfolobus acidocaldarius (strain ATCC 33909 / DSM 639 / JCM 8929 / NBRC 15157 / NCIMB 11770).